Here is a 334-residue protein sequence, read N- to C-terminus: Ornithine carbamoyltransferase (334 aa).

Residues 56 to 59, glutamine 83, arginine 107, and 134 to 137 each bind carbamoyl phosphate; these read STRT and HPTQ. L-ornithine is bound by residues asparagine 168, aspartate 232, and 236-237; that span reads SM. Residues 274-275 and arginine 320 contribute to the carbamoyl phosphate site; that span reads CL.

This sequence belongs to the aspartate/ornithine carbamoyltransferase superfamily. OTCase family.

Its subcellular location is the cytoplasm. It carries out the reaction carbamoyl phosphate + L-ornithine = L-citrulline + phosphate + H(+). Its pathway is amino-acid biosynthesis; L-arginine biosynthesis; L-arginine from L-ornithine and carbamoyl phosphate: step 1/3. In terms of biological role, reversibly catalyzes the transfer of the carbamoyl group from carbamoyl phosphate (CP) to the N(epsilon) atom of ornithine (ORN) to produce L-citrulline. This Shigella dysenteriae serotype 1 (strain Sd197) protein is Ornithine carbamoyltransferase.